The sequence spans 205 residues: Probable molybdenum cofactor guanylyltransferase (205 aa).

GTP is bound by residues 9 to 11 (LAG), Lys21, Asp66, and Asp95. Asp95 lines the Mg(2+) pocket.

The protein belongs to the MobA family. Requires Mg(2+) as cofactor.

It is found in the cytoplasm. It carries out the reaction Mo-molybdopterin + GTP + H(+) = Mo-molybdopterin guanine dinucleotide + diphosphate. Functionally, transfers a GMP moiety from GTP to Mo-molybdopterin (Mo-MPT) cofactor (Moco or molybdenum cofactor) to form Mo-molybdopterin guanine dinucleotide (Mo-MGD) cofactor. The protein is Probable molybdenum cofactor guanylyltransferase of Pelotomaculum thermopropionicum (strain DSM 13744 / JCM 10971 / SI).